The sequence spans 201 residues: FMN-dependent NADH:quinone oxidoreductase (201 aa).

FMN contacts are provided by residues Ser-10, 16-18, 96-99, and 140-143; these read SQS, MYNF, and SRGG.

It belongs to the azoreductase type 1 family. Homodimer. FMN serves as cofactor.

The enzyme catalyses 2 a quinone + NADH + H(+) = 2 a 1,4-benzosemiquinone + NAD(+). It carries out the reaction N,N-dimethyl-1,4-phenylenediamine + anthranilate + 2 NAD(+) = 2-(4-dimethylaminophenyl)diazenylbenzoate + 2 NADH + 2 H(+). In terms of biological role, quinone reductase that provides resistance to thiol-specific stress caused by electrophilic quinones. Its function is as follows. Also exhibits azoreductase activity. Catalyzes the reductive cleavage of the azo bond in aromatic azo compounds to the corresponding amines. This Shigella flexneri serotype 5b (strain 8401) protein is FMN-dependent NADH:quinone oxidoreductase.